The primary structure comprises 749 residues: DNA topoisomerase 1 (749 aa).

The segment at 1 to 110 (MSDSEDVALS…PKKEDSVETD (110 aa)) is disordered. Basic and acidic residues predominate over residues 62-75 (LSKEKVNNKVKDEL). Over residues 79–94 (PVTPKKTPKISKTPVS) the composition is skewed to low complexity. Positions 101 to 110 (PKKEDSVETD) are enriched in basic and acidic residues. Interaction with DNA stretches follow at residues 338–339 (KY), 401–406 (RAGGEK), and 493–495 (TAK). A Topo IB-type catalytic domain is found at 345–749 (NSSIKGISDM…IESTDENWRF (405 aa)). Tyr-707 acts as the O-(3'-phospho-DNA)-tyrosine intermediate in catalysis.

The protein belongs to the type IB topoisomerase family.

It localises to the nucleus. The protein resides in the nucleolus. Its subcellular location is the nucleoplasm. It carries out the reaction ATP-independent breakage of single-stranded DNA, followed by passage and rejoining.. Functionally, releases the supercoiling and torsional tension of DNA introduced during the DNA replication and transcription by transiently cleaving and rejoining one strand of the DNA duplex. Introduces a single-strand break via transesterification at the specific target site 5'-[CT]CCTTp site in duplex DNA. The scissile phosphodiester is attacked by the catalytic tyrosine of the enzyme, resulting in the formation of a DNA-(3'-phosphotyrosyl)-enzyme intermediate and the expulsion of a 5'-OH DNA strand. The free DNA strand then undergoes passage around the unbroken strand thus removing DNA supercoils. Finally, in the religation step, the DNA 5'-OH attacks the covalent intermediate to expel the active-site tyrosine and restore the DNA phosphodiester backbone. The protein is DNA topoisomerase 1 (TOP1) of Candidozyma auris (Yeast).